The sequence spans 143 residues: Transcriptional regulator MraZ (143 aa).

2 consecutive SpoVT-AbrB domains span residues 5 to 47 and 76 to 119; these read EYQH…PKDE and AIES…SKDN.

The protein belongs to the MraZ family. As to quaternary structure, forms oligomers.

Its subcellular location is the cytoplasm. It is found in the nucleoid. In Oenococcus oeni (strain ATCC BAA-331 / PSU-1), this protein is Transcriptional regulator MraZ.